The chain runs to 150 residues: Protein SprT-like (150 aa).

The region spanning 11 to 149 is the SprT-like domain; the sequence is ELVDKLSLTY…CGKCRGSLKE (139 aa). Zn(2+) is bound at residue H70. Residue E71 is part of the active site. Zn(2+) is bound at residue H74.

This sequence belongs to the SprT family. Zn(2+) is required as a cofactor.

Its subcellular location is the cytoplasm. This is Protein SprT-like from Oceanobacillus iheyensis (strain DSM 14371 / CIP 107618 / JCM 11309 / KCTC 3954 / HTE831).